We begin with the raw amino-acid sequence, 473 residues long: Cysteine--tRNA ligase (473 aa).

Residue Cys-28 participates in Zn(2+) binding. The short motif at 30–40 (MTVYDYCHLGH) is the 'HIGH' region element. Zn(2+) contacts are provided by Cys-209, His-234, and Glu-238. Positions 282–286 (KMSKS) match the 'KMSKS' region motif. Residue Lys-285 coordinates ATP.

The protein belongs to the class-I aminoacyl-tRNA synthetase family. Monomer. Requires Zn(2+) as cofactor.

It localises to the cytoplasm. The enzyme catalyses tRNA(Cys) + L-cysteine + ATP = L-cysteinyl-tRNA(Cys) + AMP + diphosphate. This is Cysteine--tRNA ligase from Neisseria meningitidis serogroup B (strain ATCC BAA-335 / MC58).